The primary structure comprises 101 residues: MIFEHALVLSAFLFSIGIYGLITSRNMVRALMCLELILNAVNINLVTFSDFFDRRQLKGNIFSIFVIAVAAAEAAIGPAIVSSIYRNRKSTRINQSNLLNK.

The next 3 membrane-spanning stretches (helical) occupy residues 2–22 (IFEH…YGLI), 32–52 (MCLE…SDFF), and 61–81 (IFSI…PAIV).

Belongs to the complex I subunit 4L family. As to quaternary structure, NDH is composed of at least 16 different subunits, 5 of which are encoded in the nucleus.

It localises to the plastid. The protein resides in the chloroplast thylakoid membrane. The catalysed reaction is a plastoquinone + NADH + (n+1) H(+)(in) = a plastoquinol + NAD(+) + n H(+)(out). It catalyses the reaction a plastoquinone + NADPH + (n+1) H(+)(in) = a plastoquinol + NADP(+) + n H(+)(out). Functionally, NDH shuttles electrons from NAD(P)H:plastoquinone, via FMN and iron-sulfur (Fe-S) centers, to quinones in the photosynthetic chain and possibly in a chloroplast respiratory chain. The immediate electron acceptor for the enzyme in this species is believed to be plastoquinone. Couples the redox reaction to proton translocation, and thus conserves the redox energy in a proton gradient. This chain is NAD(P)H-quinone oxidoreductase subunit 4L, chloroplastic, found in Phaseolus vulgaris (Kidney bean).